The primary structure comprises 316 residues: Apolipoprotein E (316 aa).

The first 18 residues, 1–18 (MKVLWVALVITLLAGCQA), serve as a signal peptide directing secretion. Repeat copies occupy residues 79 to 100 (VLMD…GQLA), 101 to 122 (PIAQ…ARLA), 123 to 144 (SDME…AMMG), 145 to 166 (QTTD…KRLL), 167 to 188 (RDAE…EGSE), 189 to 210 (RSVS…ARAA), 211 to 232 (TVGT…QKLR), and 233 to 254 (GRVE…EQLE). Residues 79-254 (VLMDETMKEV…HLEEMREQLE (176 aa)) are 8 X 22 AA approximate tandem repeats. Residue Met-142 is modified to Methionine sulfoxide. The segment at 157–167 (HLRKLRKRLLR) is LDL and other lipoprotein receptors binding. A heparin-binding site is contributed by 161-164 (LRKR). Positions 209–289 (AATVGTLASQ…SWFEPLVEDM (81 aa)) are lipid-binding and lipoprotein association. Heparin is bound at residue 228-235 (HQKLRGRV). A homooligomerization region spans residues 265 to 316 (SQMRLQAEAFQARLKSWFEPLVEDMQRQWAGLVEKVQLAMATSSTSAPSENH). Residues 277-289 (RLKSWFEPLVEDM) are specificity for association with VLDL.

It belongs to the apolipoprotein A1/A4/E family. As to quaternary structure, homotetramer. May interact with ABCA1; functionally associated with ABCA1 in the biogenesis of HDLs. May interact with APP/A4 amyloid-beta peptide; the interaction is extremely stable in vitro but its physiological significance is unclear. May interact with MAPT. May interact with MAP2. In the cerebrospinal fluid, interacts with secreted SORL1. Interacts with PMEL; this allows the loading of PMEL luminal fragment on ILVs to induce fibril nucleation. In terms of processing, APOE exists as multiple glycosylated and sialylated glycoforms within cells and in plasma. The extent of glycosylation and sialylation are tissue and context specific. Glycated in plasma VLDL. Post-translationally, phosphorylated by FAM20C in the extracellular medium.

The protein resides in the secreted. It is found in the extracellular space. The protein localises to the extracellular matrix. Its subcellular location is the extracellular vesicle. It localises to the endosome. The protein resides in the multivesicular body. In terms of biological role, APOE is an apolipoprotein, a protein associating with lipid particles, that mainly functions in lipoprotein-mediated lipid transport between organs via the plasma and interstitial fluids. APOE is a core component of plasma lipoproteins and is involved in their production, conversion and clearance. Apolipoproteins are amphipathic molecules that interact both with lipids of the lipoprotein particle core and the aqueous environment of the plasma. As such, APOE associates with chylomicrons, chylomicron remnants, very low density lipoproteins (VLDL) and intermediate density lipoproteins (IDL) but shows a preferential binding to high-density lipoproteins (HDL). It also binds a wide range of cellular receptors including the LDL receptor/LDLR and the very low-density lipoprotein receptor/VLDLR that mediate the cellular uptake of the APOE-containing lipoprotein particles. Finally, APOE also has a heparin-binding activity and binds heparan-sulfate proteoglycans on the surface of cells, a property that supports the capture and the receptor-mediated uptake of APOE-containing lipoproteins by cells. The sequence is that of Apolipoprotein E (APOE) from Lipotes vexillifer (Yangtze river dolphin).